A 311-amino-acid polypeptide reads, in one-letter code: Acetyl-coenzyme A carboxylase carboxyl transferase subunit alpha (311 aa).

One can recognise a CoA carboxyltransferase C-terminal domain in the interval 36–286 (NLEKETQKVY…SDYVLKAIEE (251 aa)).

Belongs to the AccA family. In terms of assembly, acetyl-CoA carboxylase is a heterohexamer composed of biotin carboxyl carrier protein (AccB), biotin carboxylase (AccC) and two subunits each of ACCase subunit alpha (AccA) and ACCase subunit beta (AccD).

The protein resides in the cytoplasm. It catalyses the reaction N(6)-carboxybiotinyl-L-lysyl-[protein] + acetyl-CoA = N(6)-biotinyl-L-lysyl-[protein] + malonyl-CoA. It functions in the pathway lipid metabolism; malonyl-CoA biosynthesis; malonyl-CoA from acetyl-CoA: step 1/1. Functionally, component of the acetyl coenzyme A carboxylase (ACC) complex. First, biotin carboxylase catalyzes the carboxylation of biotin on its carrier protein (BCCP) and then the CO(2) group is transferred by the carboxyltransferase to acetyl-CoA to form malonyl-CoA. This Campylobacter lari (strain RM2100 / D67 / ATCC BAA-1060) protein is Acetyl-coenzyme A carboxylase carboxyl transferase subunit alpha.